Reading from the N-terminus, the 257-residue chain is BTB/POZ domain-containing protein KCTD1 (257 aa).

Residues 1–25 (MSRPLITRSPASPLNNQGIPTPAQL) form a disordered region. Phosphoserine is present on residues serine 9 and serine 12. Polar residues predominate over residues 9–25 (SPASPLNNQGIPTPAQL). Positions 30–100 (APVHIDVGGH…LRTSKLLIPD (71 aa)) constitute a BTB domain.

In terms of assembly, forms homopentamers. Interacts with KCTD15, probably forming heteropentamers depending on its abundance in a cell-type dependent manner. Interacts with TFAP2A, TFAP2B and TFAP2C via the BTB domain. In terms of processing, sumoylated. As to expression, expressed in mammary gland, kidney, brain and ovary.

It localises to the nucleus. Its function is as follows. May repress the transcriptional activity of AP-2 family members, including TFAP2A, TFAP2B and TFAP2C to various extent. In Homo sapiens (Human), this protein is BTB/POZ domain-containing protein KCTD1 (KCTD1).